The sequence spans 352 residues: DNA integrity scanning protein DisA (352 aa).

In terms of domain architecture, DAC spans 3–143 (PQELIEKIKL…NYKYVVNQVD (141 aa)). ATP-binding positions include G71, L89, and 102-106 (TRHRT).

Belongs to the DisA family. Homooctamer. The cofactor is Mg(2+).

It catalyses the reaction 2 ATP = 3',3'-c-di-AMP + 2 diphosphate. In terms of biological role, participates in a DNA-damage check-point. DisA forms globular foci that rapidly scan along the chromosomes searching for lesions. Functionally, also has diadenylate cyclase activity, catalyzing the condensation of 2 ATP molecules into cyclic di-AMP (c-di-AMP). c-di-AMP likely acts as a signaling molecule that may couple DNA integrity with a cellular process. The polypeptide is DNA integrity scanning protein DisA (Thermotoga neapolitana (strain ATCC 49049 / DSM 4359 / NBRC 107923 / NS-E)).